The following is a 510-amino-acid chain: uncharacterized protein (510 aa).

Over 1–89 the chain is Lumenal; sequence MTSSLDDIEP…QGQRKKVLLK (89 aa). The tract at residues 38–76 is disordered; the sequence is AVSQGVPDMDGQTTDSSKDPEPNSEDKKAFPPSSGSFFS. A compositionally biased stretch (basic and acidic residues) spans 53–66; the sequence is SSKDPEPNSEDKKA. Residues 67-76 show a composition bias toward low complexity; that stretch reads FPPSSGSFFS. The chain crosses the membrane as a helical span at residues 90 to 110; it reads FVFTNCLLAIICFTMFVLFWG. At 111–123 the chain is on the cytoplasmic side; that stretch reads ALYDTSKYLHKVK. A helical transmembrane segment spans residues 124 to 144; the sequence is LLVVIQEPPVVILDNNSSMVV. Residues 145-312 are Lumenal-facing; the sequence is PSISYALPTF…TDRILLAPTQ (168 aa). A helical membrane pass occupies residues 313–333; it reads IGVVYCLLLTFFQFLLYGPLH. Residues 334–349 are Cytoplasmic-facing; that stretch reads VEMAKVLRPANGLIYR. Residues 350–370 traverse the membrane as a helical segment; that stretch reads IAMSWFTFFFASLFFCTTTAI. The Lumenal portion of the chain corresponds to 371 to 381; the sequence is FQVDFTKSFGR. Residues 382 to 402 traverse the membrane as a helical segment; the sequence is GGFVVYWMSTWLFMLAAGGAN. The Cytoplasmic segment spans residues 403 to 416; it reads ENAVMLVITLGPQY. The chain crosses the membrane as a helical span at residues 417–437; the sequence is LGFWILSFVILNIAPSFFPLA. Residues 438-474 are Lumenal-facing; the sequence is LNNNVYRYGYMMPVHNVIDIYRVIFFDVTRRKMGRNY. The chain crosses the membrane as a helical span at residues 475–495; sequence GILVALIALNTALLPFVGKYA. Over 496–510 the chain is Cytoplasmic; it reads SRKLKQKALVAAKQS.

To yeast SNG1.

Its subcellular location is the endoplasmic reticulum membrane. This is an uncharacterized protein from Saccharomyces cerevisiae (strain ATCC 204508 / S288c) (Baker's yeast).